The primary structure comprises 99 residues: MMNMQNMMRQAQKLQKQMEKSQAELAATQFTGSSVQDLVTATFTGDKKLVSIDFKADVVDADDLETLQEMTIQAVNAALTKVDEATQKKLGAFAGKLPF.

It belongs to the YbaB/EbfC family. Homodimer.

It localises to the cytoplasm. It is found in the nucleoid. Binds to DNA and alters its conformation. May be involved in regulation of gene expression, nucleoid organization and DNA protection. This is Nucleoid-associated protein SSU98_0195 from Streptococcus suis (strain 98HAH33).